Consider the following 35-residue polypeptide: Probable endonuclease 4 (35 aa).

E15 is a Zn(2+) binding site.

The protein belongs to the AP endonuclease 2 family. The cofactor is Zn(2+).

The catalysed reaction is Endonucleolytic cleavage to 5'-phosphooligonucleotide end-products.. Endonuclease IV plays a role in DNA repair. It cleaves phosphodiester bonds at apurinic or apyrimidinic (AP) sites, generating a 3'-hydroxyl group and a 5'-terminal sugar phosphate. In Yersinia enterocolitica, this protein is Probable endonuclease 4 (nfo).